The primary structure comprises 794 residues: K(+)-insensitive pyrophosphate-energized proton pump (794 aa).

5 helical membrane-spanning segments follow: residues 20–40, 74–94, 102–122, 163–183, and 194–214; these read ALVA…GVLV, TLGV…ADDW, IFFL…MWLA, GVVG…VVLV, and GFGL…GIFT. Lys-215 serves as a coordination point for substrate. Positions 218, 222, 245, and 248 each coordinate Mg(2+). Helical transmembrane passes span 264–284, 285–305, 321–341, 365–385, 422–442, and 446–466; these read YAVT…DFGL, AFPL…IFAV, GFFI…FVYL, ILAL…QQLT, AVYT…LGGT, and LALF…GVIV. Residue Asp-476 coordinates Mg(2+). A run of 3 helical transmembrane segments spans residues 508–528, 564–584, and 641–661; these read AITK…LFGS, VGLI…INAV, and IFIG…GAIG. Asp-678, Asp-704, and Asp-708 together coordinate Ca(2+). Lys-711 is a substrate binding site. A run of 2 helical transmembrane segments spans residues 717–737 and 747–767; these read AINP…PAVI and VVVR…AVYV.

Belongs to the H(+)-translocating pyrophosphatase (TC 3.A.10) family. K(+)-insensitive subfamily. Homodimer. Mg(2+) is required as a cofactor.

It is found in the cell membrane. It carries out the reaction diphosphate + H2O + H(+)(in) = 2 phosphate + 2 H(+)(out). In terms of biological role, proton pump that utilizes the energy of pyrophosphate hydrolysis as the driving force for proton movement across the membrane. Generates a proton motive force. This chain is K(+)-insensitive pyrophosphate-energized proton pump, found in Streptomyces coelicolor (strain ATCC BAA-471 / A3(2) / M145).